A 304-amino-acid chain; its full sequence is MKKALIAIGLILGTITVAIIGYGIYLYSSIQNTAGEMHEPLDRGDKSDKRDVAFDISAQDPFSILIAGVDSREDTHAGRSDTLIVLTVNPKEESIKMLSIPRDTRTEIVGRGTDDKINHAYAFGGAQMTIDTVENFLDIPIDHYVSINMDGFTQLVDALGGVSVENSFAFSQNGYQFEEGEIFLETGDEALAYARMRKQDSRGDFGRNDRQRQIVEAVIKQSAQFSSITKAGAILDAVGESVRTDLQLDGMWELQSNYRGAAKNIEQLEITGEGTRINNIYYLIIPQEEIARVQGELKSHLELS.

Residues 1–3 (MKK) lie on the Cytoplasmic side of the membrane. The chain crosses the membrane as a helical; Signal-anchor for type II membrane protein span at residues 4-24 (ALIAIGLILGTITVAIIGYGI). Residues 25 to 304 (YLYSSIQNTA…GELKSHLELS (280 aa)) are Extracellular-facing.

Belongs to the LytR/CpsA/Psr (LCP) family.

It localises to the cell membrane. It functions in the pathway cell wall biogenesis. In terms of biological role, may catalyze the final step in cell wall teichoic acid biosynthesis, the transfer of the anionic cell wall polymers (APs) from their lipid-linked precursor to the cell wall peptidoglycan (PG). The protein is Polyisoprenyl-teichoic acid--peptidoglycan teichoic acid transferase TagU of Halalkalibacterium halodurans (strain ATCC BAA-125 / DSM 18197 / FERM 7344 / JCM 9153 / C-125) (Bacillus halodurans).